A 264-amino-acid polypeptide reads, in one-letter code: Sororin (264 aa).

The interval 1–45 (MAERRTRSGGAAQRSGPRTSLTKPSKSSKRKSGSDLPNSFSEIWP) is disordered. Phosphoserine occurs at positions 20, 32, 34, 78, and 82. Residues 87 to 89 (KEN) carry the KEN box motif. At Thr97 the chain carries Phosphothreonine. Position 106 is a phosphoserine (Ser106). Residues Thr110, Thr114, and Thr159 each carry the phosphothreonine modification. Positions 166 to 168 (FGF) match the FGF motif motif. Ser222 is modified (phosphoserine). Residues 242–264 (LDKWAVAMNAEFEAAEQFELLIE) are C-terminal Sororin domain.

Belongs to the sororin family. As to quaternary structure, interacts with the APC/C complex. Interacts with the chromatin-bound cohesin complex; the interaction is indirect, occurs after DNA replication and requires acetylation of the cohesin component SMC3. Interacts (via the FGF motif) with PDS5A and PDS5B; the interaction is direct and prevents the interaction of PDS5A with WAPL. Phosphorylated. Phosphorylation, as cells enter mitosis, disrupts the interaction with PDS5A and relieves the inhibition of WAPL by CDCA5. Post-translationally, ubiquitinated by the APC/C complex in G1, leading to its degradation.

The protein resides in the nucleus. Its subcellular location is the chromosome. It localises to the cytoplasm. Functionally, regulator of sister chromatid cohesion in mitosis stabilizing cohesin complex association with chromatin. May antagonize the action of WAPL which stimulates cohesin dissociation from chromatin. Cohesion ensures that chromosome partitioning is accurate in both meiotic and mitotic cells and plays an important role in DNA repair. Required for efficient DNA double-stranded break repair. The sequence is that of Sororin (Cdca5) from Mus musculus (Mouse).